The primary structure comprises 431 residues: Gamma-glutamyl phosphate reductase (431 aa).

This sequence belongs to the gamma-glutamyl phosphate reductase family.

The protein resides in the cytoplasm. The catalysed reaction is L-glutamate 5-semialdehyde + phosphate + NADP(+) = L-glutamyl 5-phosphate + NADPH + H(+). It functions in the pathway amino-acid biosynthesis; L-proline biosynthesis; L-glutamate 5-semialdehyde from L-glutamate: step 2/2. Catalyzes the NADPH-dependent reduction of L-glutamate 5-phosphate into L-glutamate 5-semialdehyde and phosphate. The product spontaneously undergoes cyclization to form 1-pyrroline-5-carboxylate. In Synechococcus elongatus (strain ATCC 33912 / PCC 7942 / FACHB-805) (Anacystis nidulans R2), this protein is Gamma-glutamyl phosphate reductase.